Consider the following 268-residue polypeptide: uncharacterized protein (268 aa).

This sequence to yeast YKR075c.

This is an uncharacterized protein from Saccharomyces cerevisiae (strain ATCC 204508 / S288c) (Baker's yeast).